The following is a 115-amino-acid chain: Biotrophy-associated secreted protein 1 (115 aa).

The N-terminal stretch at 1 to 22 (MHVFNFAALFTVLATFTATAAA) is a signal peptide. The interval 24-115 (DQGSNTFDQR…GIRRVENYYP (92 aa)) is disordered. 2 stretches are compositionally biased toward basic and acidic residues: residues 46 to 55 (IREEKQENVG) and 91 to 115 (QQKE…NYYP).

It localises to the secreted. The protein resides in the host cytoplasm. Functionally, secreted effector involved in biotrophic colonization of plant cells. Induces an early, basal defense response in susceptible rice, including rapid callose deposition and ROS production in leaves and calli. Also promotes sporulation and mycelia growth suggesting a role across the whole process of interaction, from the biotrophic phase to sporulation. This is Biotrophy-associated secreted protein 1 from Pyricularia oryzae (strain 70-15 / ATCC MYA-4617 / FGSC 8958) (Rice blast fungus).